The sequence spans 634 residues: tRNA uridine 5-carboxymethylaminomethyl modification enzyme MnmG (634 aa).

14–19 serves as a coordination point for FAD; it reads GGGHAG. NAD(+) is bound at residue 279-293; it reads GPRYCPSIEDKVVRF.

Belongs to the MnmG family. Homodimer. Heterotetramer of two MnmE and two MnmG subunits. FAD serves as cofactor.

The protein localises to the cytoplasm. Its function is as follows. NAD-binding protein involved in the addition of a carboxymethylaminomethyl (cmnm) group at the wobble position (U34) of certain tRNAs, forming tRNA-cmnm(5)s(2)U34. This is tRNA uridine 5-carboxymethylaminomethyl modification enzyme MnmG from Xanthomonas campestris pv. campestris (strain B100).